Here is a 300-residue protein sequence, read N- to C-terminus: MTTSASSSDYSNTEDCISECKSNQSASVGYYPSENTFSYEDVVSPEEAASVESSAHFLPPVQGSWGTESLRRLFRKRDQMKHDPEQFCKLSITLAWDIDVGSDRADSLANLDLNSHSQWMNKWPEDRTKLTPYKLDNLVRKLETFLGKEKGGQHDSHVLPESTQKEDVFLNSSPPPHTAQVSHHEHDACQDLPKHKALENEDICQAPENPPRLLKDEVVEISQADGSSLETSSMSSPRPEDASHLHRTSCMNFQWVFHWLRTQVSSRWRREHPSQAPVSWHQKAMRRMHSFRGNRIQPQE.

2 disordered regions span residues 167 to 186 (DVFL…HHEH) and 224 to 244 (ADGS…DASH). Polar residues predominate over residues 224 to 236 (ADGSSLETSSMSS).

This is an uncharacterized protein from Rattus norvegicus (Rat).